Here is a 281-residue protein sequence, read N- to C-terminus: ATP phosphoribosyltransferase (281 aa).

This sequence belongs to the ATP phosphoribosyltransferase family. Long subfamily. Mg(2+) is required as a cofactor.

The protein localises to the cytoplasm. The catalysed reaction is 1-(5-phospho-beta-D-ribosyl)-ATP + diphosphate = 5-phospho-alpha-D-ribose 1-diphosphate + ATP. The protein operates within amino-acid biosynthesis; L-histidine biosynthesis; L-histidine from 5-phospho-alpha-D-ribose 1-diphosphate: step 1/9. With respect to regulation, feedback inhibited by histidine. Functionally, catalyzes the condensation of ATP and 5-phosphoribose 1-diphosphate to form N'-(5'-phosphoribosyl)-ATP (PR-ATP). Has a crucial role in the pathway because the rate of histidine biosynthesis seems to be controlled primarily by regulation of HisG enzymatic activity. This Corynebacterium jeikeium (strain K411) protein is ATP phosphoribosyltransferase.